The chain runs to 252 residues: Carbohydrate deacetylase (252 aa).

Mg(2+) contacts are provided by His59 and His122.

It belongs to the YdjC deacetylase family. Homodimer. Requires Mg(2+) as cofactor.

Probably catalyzes the deacetylation of acetylated carbohydrates an important step in the degradation of oligosaccharides. The sequence is that of Carbohydrate deacetylase from Vibrio vulnificus (strain CMCP6).